The primary structure comprises 296 residues: 33 kDa chaperonin (296 aa).

2 disulfide bridges follow: C233–C235 and C267–C270.

It belongs to the HSP33 family. In terms of processing, under oxidizing conditions two disulfide bonds are formed involving the reactive cysteines. Under reducing conditions zinc is bound to the reactive cysteines and the protein is inactive.

It localises to the cytoplasm. Functionally, redox regulated molecular chaperone. Protects both thermally unfolding and oxidatively damaged proteins from irreversible aggregation. Plays an important role in the bacterial defense system toward oxidative stress. The polypeptide is 33 kDa chaperonin (Actinobacillus pleuropneumoniae serotype 7 (strain AP76)).